The chain runs to 142 residues: Putative pre-16S rRNA nuclease (142 aa).

Belongs to the YqgF nuclease family.

It localises to the cytoplasm. Could be a nuclease involved in processing of the 5'-end of pre-16S rRNA. This chain is Putative pre-16S rRNA nuclease, found in Staphylococcus carnosus (strain TM300).